A 423-amino-acid polypeptide reads, in one-letter code: Phthiocerol/phthiodiolone dimycocerosyl transferase (423 aa).

Residue His-125 is the Proton acceptor of the active site.

Belongs to the acyltransferase PapA5 family. Monomer. Interacts directly with the acyl carrier protein (ACP) domain of the mycocerosic acid synthase (mas) protein.

It carries out the reaction 2 a mycocerosyl-[mycocerosic acid synthase] + a phthiocerol = a dimycocerosyl phthiocerol + 2 holo-[mycocerosic acid synthase].. It catalyses the reaction 2 a mycocerosyl-[mycocerosic acid synthase] + a phthiodiolone = a dimycocerosyl phthiodiolone + 2 holo-[mycocerosic acid synthase].. The catalysed reaction is 2 a mycocerosyl-[mycocerosic acid synthase] + a phenolphthiocerol = a dimycocerosyl phenolphthiocerol + 2 holo-[mycocerosic acid synthase].. Catalyzes diesterification of phthiocerol, phthiodiolone, and phenolphthiocerol with mycocerosic acids, the final step in the phthiocerol, phthiodiolone and phenolphthiocerol dimycocerosate esters (PDIM) synthesis. Can directly transfer the mycocerosate bound to the mycocerosic acid synthase (mas) onto the substrate alcohols. This chain is Phthiocerol/phthiodiolone dimycocerosyl transferase (papA5), found in Mycobacterium leprae (strain TN).